A 468-amino-acid chain; its full sequence is Aldehyde dehydrogenase family 3 member B1 (468 aa).

An N-acetylmethionine modification is found at M1. Position 188-193 (188-193 (GNAYVG)) interacts with NAD(+). Residues E210 and C244 contribute to the active site. 2 S-palmitoyl cysteine lipidation sites follow: C462 and C463. Residue C465 is modified to Cysteine methyl ester. C465 carries the S-geranylgeranyl cysteine lipid modification. The propeptide at 466 to 468 (TLL) is removed in mature form.

This sequence belongs to the aldehyde dehydrogenase family. In terms of processing, dually lipidated in the C-terminus; prenylation occurs prior to, and is a prerequisite for palmitoylation. It is also required for activity towards long-chain substrates. As to expression, highly expressed in kidney and liver. In brain is expressed at moderate levels in cortex, striatum and hippocampus, and at lower levels in brainstem and cerebellum.

The protein resides in the cell membrane. It catalyses the reaction an aldehyde + NAD(+) + H2O = a carboxylate + NADH + 2 H(+). It carries out the reaction a long-chain fatty aldehyde + NAD(+) + H2O = a long-chain fatty acid + NADH + 2 H(+). The enzyme catalyses a medium-chain fatty aldehyde + NAD(+) + H2O = a medium-chain fatty acid + NADH + 2 H(+). The catalysed reaction is octanal + NAD(+) + H2O = octanoate + NADH + 2 H(+). It catalyses the reaction nonanal + NAD(+) + H2O = nonanoate + NADH + 2 H(+). It carries out the reaction hexadecanoate + NADH + 2 H(+) = hexadecanal + NAD(+) + H2O. The enzyme catalyses (2E)-octenal + NAD(+) + H2O = (2E)-octenoate + NADH + 2 H(+). The catalysed reaction is (E)-non-2-enal + NAD(+) + H2O = (E)-non-2-enoate + NADH + 2 H(+). It catalyses the reaction (E)-4-hydroxynon-2-enal + NAD(+) + H2O = (E)-4-hydroxynon-2-enoate + NADH + 2 H(+). It carries out the reaction (2E)-hexadecenal + NAD(+) + H2O = (E)-hexadec-2-enoate + NADH + 2 H(+). The enzyme catalyses benzaldehyde + NAD(+) + H2O = benzoate + NADH + 2 H(+). The catalysed reaction is an aldehyde + NADP(+) + H2O = a carboxylate + NADPH + 2 H(+). It catalyses the reaction a medium-chain fatty aldehyde + NADP(+) + H2O = a medium-chain fatty acid + NADPH + 2 H(+). It carries out the reaction hexanal + NADP(+) + H2O = hexanoate + NADPH + 2 H(+). The enzyme catalyses octanal + NADP(+) + H2O = octanoate + NADPH + 2 H(+). The catalysed reaction is nonanal + NADP(+) + H2O = nonanoate + NADPH + 2 H(+). It catalyses the reaction (2E)-octenal + NADP(+) + H2O = (2E)-octenoate + NADPH + 2 H(+). It carries out the reaction (E)-non-2-enal + NADP(+) + H2O = (E)-non-2-enoate + NADPH + 2 H(+). The enzyme catalyses (E)-4-hydroxynon-2-enal + NADP(+) + H2O = (E)-4-hydroxynon-2-enoate + NADPH + 2 H(+). The catalysed reaction is benzaldehyde + NADP(+) + H2O = benzoate + NADPH + 2 H(+). It functions in the pathway alcohol metabolism; ethanol degradation; acetate from ethanol: step 2/2. Oxidizes medium and long chain saturated and unsaturated fatty aldehydes generated in the plasma membrane into non-toxic fatty acids. May have a protective role against the cytotoxicity induced by lipid peroxidation. Short-chain fatty aldehydes are not good substrates. Can use both NADP(+) and NAD(+) as electron acceptor in vitro, however in vivo preference will depend on their tissue levels. Low activity towards acetaldehyde and 3,4-dihydroxyphenylacetaldehyde. Able to metabolize aromatic aldehydes such as benzaldehyde to their acid form. This is Aldehyde dehydrogenase family 3 member B1 (Aldh3b1) from Mus musculus (Mouse).